The following is a 539-amino-acid chain: M protein, serotype 24 (539 aa).

Residues Met-1–Ala-42 form the signal peptide. One copy of the A-1 repeat lies at Leu-118–Ala-152. The 5.3 X 35 AA tandem repeats, A-type stretch occupies residues Leu-118–Glu-301. One copy of the A-2 repeat lies at Leu-153–Ala-187. The A-3 repeat unit spans residues Leu-188–Ala-222. The stretch at Leu-223–Ala-257 is one A-4 repeat. The A-5 repeat unit spans residues Leu-258–Ala-292. Residues Leu-293–Lys-297 form an A-6; truncated repeat. Residues Lys-297 to Ala-401 form a disordered region. 3 C repeats span residues Ala-298 to His-332, Gln-333 to His-367, and Gln-368 to Leu-402. The span at Gln-303–Gln-312 shows a compositional bias: polar residues. Basic and acidic residues-rich tracts occupy residues Leu-314–Lys-340, Leu-349–Lys-375, and Leu-384–Ala-401. 4 D repeats span residues Ala-435 to Glu-440, Ala-441 to Glu-446, Ala-449 to Glu-454, and Ala-456 to Gly-461. The interval Ala-456–Thr-511 is disordered. The short motif at Leu-505–Gly-509 is the LPXTG sorting signal element. Residue Thr-508 is modified to Pentaglycyl murein peptidoglycan amidated threonine. The propeptide at Gly-509 to Asn-539 is removed by sortase.

The protein belongs to the M protein family.

It localises to the secreted. Its subcellular location is the cell wall. Its function is as follows. This protein is one of the different antigenic serotypes of protein M. Protein M is closely associated with virulence of the bacterium and can render the organism resistant to phagocytosis. The sequence is that of M protein, serotype 24 (emm24) from Streptococcus pyogenes.